A 175-amino-acid polypeptide reads, in one-letter code: NADH-ubiquinone oxidoreductase chain 6 (175 aa).

Helical transmembrane passes span 1–21 (MMTY…VGFS), 27–47 (VYGG…VMNF), 49–69 (GSFL…VVFG), 88–108 (VVLG…LYVL), and 149–169 (YGVW…VVIM).

The protein belongs to the complex I subunit 6 family. Core subunit of respiratory chain NADH dehydrogenase (Complex I) which is composed of 45 different subunits.

It localises to the mitochondrion inner membrane. It catalyses the reaction a ubiquinone + NADH + 5 H(+)(in) = a ubiquinol + NAD(+) + 4 H(+)(out). Its function is as follows. Core subunit of the mitochondrial membrane respiratory chain NADH dehydrogenase (Complex I) which catalyzes electron transfer from NADH through the respiratory chain, using ubiquinone as an electron acceptor. Essential for the catalytic activity and assembly of complex I. This is NADH-ubiquinone oxidoreductase chain 6 (MT-ND6) from Pteropus dasymallus (Ryukyu flying fox).